A 557-amino-acid polypeptide reads, in one-letter code: Formate--tetrahydrofolate ligase 2 (557 aa).

66–73 (TPAGEGKT) is a binding site for ATP.

It belongs to the formate--tetrahydrofolate ligase family.

It carries out the reaction (6S)-5,6,7,8-tetrahydrofolate + formate + ATP = (6R)-10-formyltetrahydrofolate + ADP + phosphate. It participates in one-carbon metabolism; tetrahydrofolate interconversion. The protein is Formate--tetrahydrofolate ligase 2 of Streptococcus pyogenes serotype M3 (strain ATCC BAA-595 / MGAS315).